The sequence spans 134 residues: Small ribosomal subunit protein uS8c (134 aa).

The protein belongs to the universal ribosomal protein uS8 family. In terms of assembly, part of the 30S ribosomal subunit.

It is found in the plastid. The protein resides in the chloroplast. Functionally, one of the primary rRNA binding proteins, it binds directly to 16S rRNA central domain where it helps coordinate assembly of the platform of the 30S subunit. This is Small ribosomal subunit protein uS8c (rps8) from Phaseolus angularis (Azuki bean).